The chain runs to 33 residues: Cytochrome b6-f complex subunit 8 (33 aa).

The chain crosses the membrane as a helical span at residues 2-22 (LITLGWASLAALFSFSIAMVV).

It belongs to the PetN family. As to quaternary structure, the 4 large subunits of the cytochrome b6-f complex are cytochrome b6, subunit IV (17 kDa polypeptide, PetD), cytochrome f and the Rieske protein, while the 4 small subunits are PetG, PetL, PetM and PetN. The complex functions as a dimer.

The protein localises to the plastid. The protein resides in the organellar chromatophore thylakoid membrane. In terms of biological role, component of the cytochrome b6-f complex, which mediates electron transfer between photosystem II (PSII) and photosystem I (PSI), cyclic electron flow around PSI, and state transitions. In Paulinella chromatophora, this protein is Cytochrome b6-f complex subunit 8.